The primary structure comprises 279 residues: PHO85 cyclin-1 (279 aa).

A Cyclin N-terminal domain is found at 19–152 (DIIKFLTDTT…LLQLLNWDLR (134 aa)). Positions 29 to 36 (LRVVPSSN) are required for degradation by DMA1. The residue at position 39 (threonine 39) is a Phosphothreonine; by PHO85. Serine 43 carries the post-translational modification Phosphoserine; by PHO85. Residues lysine 82 and lysine 121 each participate in a glycyl lysine isopeptide (Lys-Gly) (interchain with G-Cter in ubiquitin) cross-link.

This sequence belongs to the cyclin family. PCL1,2 subfamily. In terms of assembly, forms a cyclin-CDK complex with PHO85. Interacts with HMS1, NCP1 and NPA3. Interacts with DMA1. In terms of processing, phosphorylated by PHO85; necessary for interaction with DMA1 and subsequent degradation. Post-translationally, ubiquitinated by E3 ubiquitin ligase DMA1 in response to nutrient condition; this targets PCL1 for destruction.

The protein resides in the cytoplasm. It is found in the nucleus. Functionally, G1/S-specific cyclin partner of the cyclin-dependent kinase (CDK) PHO85. Essential for the control of the cell cycle at the G1/S (start) transition. The PCL1-PHO85 cyclin-CDK holoenzyme is involved in phosphorylation of the CDK inhibitor (CKI) SIC1, which is required for its ubiquitination and degradation, releasing repression of b-type cyclins and promoting exit from mitosis. Together with cyclin PCL2, positively controls degradation of sphingoid long chain base kinase LCB4. PCL1-PHO85 phosphorylates LCB4, which is required for its ubiquitination and degradation. PCL1-PHO85 also phosphorylates HMS1, NCP1 and NPA3, which may all have a role in mitotic exit. This chain is PHO85 cyclin-1, found in Saccharomyces cerevisiae (strain ATCC 204508 / S288c) (Baker's yeast).